We begin with the raw amino-acid sequence, 140 residues long: Large ribosomal subunit protein uL11 (140 aa).

The protein belongs to the universal ribosomal protein uL11 family. As to quaternary structure, part of the ribosomal stalk of the 50S ribosomal subunit. Interacts with L10 and the large rRNA to form the base of the stalk. L10 forms an elongated spine to which L12 dimers bind in a sequential fashion forming a multimeric L10(L12)X complex. In terms of processing, one or more lysine residues are methylated.

Forms part of the ribosomal stalk which helps the ribosome interact with GTP-bound translation factors. This chain is Large ribosomal subunit protein uL11, found in Staphylococcus carnosus (strain TM300).